A 476-amino-acid polypeptide reads, in one-letter code: Lipase (476 aa).

An N-terminal signal peptide occupies residues 1-23 (MGIFDYKNLGTEGSKTLFADAMA). Residue S207 is the Charge relay system of the active site. Hemolysin-type calcium-binding repeat units follow at residues 372-389 (IGSD…ADFI), 390-407 (EGGK…HNTF), and 410-427 (SGHF…TDKL). Ca(2+)-binding residues include D437, D440, and D448.

The protein belongs to the AB hydrolase superfamily. Lipase family.

It catalyses the reaction a triacylglycerol + H2O = a diacylglycerol + a fatty acid + H(+). The chain is Lipase from Pseudomonas fluorescens.